Consider the following 1011-residue polypeptide: E3 ubiquitin-protein ligase mib1 (1011 aa).

The MIB/HERC2 1 domain maps to 6 to 74 (NNRVMVEGVG…AYDLRIMDSA (69 aa)). The segment at 80–132 (HDGTMCDTCRQQPIIGIRWKCAECTNYDLCTVCYHGDKHHLRHRFYRITTPGS) adopts a ZZ-type zinc-finger fold. The Zn(2+) site is built by Cys-85, Cys-88, Cys-100, Cys-103, Cys-109, Cys-112, His-118, and His-122. One can recognise an MIB/HERC2 2 domain in the interval 143–221 (SKKITARGIF…MSDLKCVQDA (79 aa)). ANK repeat units lie at residues 430–460 (DLNE…DVNG), 463–492 (AGHT…DVEA), 496–525 (DGDR…DLNA), 529–558 (RRQT…HPSL), 562–591 (EGDT…DVTI), 595–627 (NGFN…IVDE), 631–661 (DGYT…NLDI), 665–694 (NQQT…KLDI), and 698–729 (DGDT…KVDT). RING-type zinc fingers lie at residues 820–855 (CMVC…LLCK) and 867–902 (CVVC…VQCR). Residues 936 to 963 (QKDKDNTNVNADVQKLQQQLQDIKEQTM) adopt a coiled-coil conformation. Residues 964 to 997 (CPVCLDRLKNMIFMCGHGTCQLCGDRMSECPICR) form an RING-type 3 zinc finger.

It is found in the cytoplasm. The protein localises to the cytoskeleton. It localises to the microtubule organizing center. Its subcellular location is the centrosome. The protein resides in the centriolar satellite. The catalysed reaction is S-ubiquitinyl-[E2 ubiquitin-conjugating enzyme]-L-cysteine + [acceptor protein]-L-lysine = [E2 ubiquitin-conjugating enzyme]-L-cysteine + N(6)-ubiquitinyl-[acceptor protein]-L-lysine.. It functions in the pathway protein modification; protein ubiquitination. In terms of biological role, E3 ubiquitin-protein ligase that mediates ubiquitination of Delta receptors, which act as ligands of Notch proteins. Positively regulates the Delta-mediated Notch signaling by ubiquitinating the intracellular domain of Delta, leading to endocytosis of Delta receptors. This is E3 ubiquitin-protein ligase mib1 (mib1) from Xenopus laevis (African clawed frog).